A 240-amino-acid polypeptide reads, in one-letter code: 4-hydroxy-tetrahydrodipicolinate reductase (240 aa).

NAD(+)-binding positions include 79 to 81 and 103 to 106; these read ATT and SANM. Residue histidine 135 is the Proton donor/acceptor of the active site. Residue histidine 136 participates in (S)-2,3,4,5-tetrahydrodipicolinate binding. The Proton donor role is filled by lysine 139. 145–146 provides a ligand contact to (S)-2,3,4,5-tetrahydrodipicolinate; sequence GT.

It belongs to the DapB family.

It is found in the cytoplasm. The catalysed reaction is (S)-2,3,4,5-tetrahydrodipicolinate + NAD(+) + H2O = (2S,4S)-4-hydroxy-2,3,4,5-tetrahydrodipicolinate + NADH + H(+). It carries out the reaction (S)-2,3,4,5-tetrahydrodipicolinate + NADP(+) + H2O = (2S,4S)-4-hydroxy-2,3,4,5-tetrahydrodipicolinate + NADPH + H(+). It participates in amino-acid biosynthesis; L-lysine biosynthesis via DAP pathway; (S)-tetrahydrodipicolinate from L-aspartate: step 4/4. Its function is as follows. Catalyzes the conversion of 4-hydroxy-tetrahydrodipicolinate (HTPA) to tetrahydrodipicolinate. The sequence is that of 4-hydroxy-tetrahydrodipicolinate reductase from Staphylococcus aureus (strain USA300).